The sequence spans 403 residues: Phosphopentomutase (403 aa).

Mn(2+) is bound by residues Asp13, Asp298, His303, Asp339, His340, and His351.

Belongs to the phosphopentomutase family. It depends on Mn(2+) as a cofactor.

The protein resides in the cytoplasm. It catalyses the reaction 2-deoxy-alpha-D-ribose 1-phosphate = 2-deoxy-D-ribose 5-phosphate. It carries out the reaction alpha-D-ribose 1-phosphate = D-ribose 5-phosphate. The protein operates within carbohydrate degradation; 2-deoxy-D-ribose 1-phosphate degradation; D-glyceraldehyde 3-phosphate and acetaldehyde from 2-deoxy-alpha-D-ribose 1-phosphate: step 1/2. Its function is as follows. Isomerase that catalyzes the conversion of deoxy-ribose 1-phosphate (dRib-1-P) and ribose 1-phosphate (Rib-1-P) to deoxy-ribose 5-phosphate (dRib-5-P) and ribose 5-phosphate (Rib-5-P), respectively. The chain is Phosphopentomutase from Streptococcus thermophilus (strain CNRZ 1066).